Here is a 242-residue protein sequence, read N- to C-terminus: Anamorsin homolog (242 aa).

Residues 1-140 (MMNFADTLVI…NVTAENPDFL (140 aa)) are N-terminal SAM-like domain. Residues 141–162 (SNEDDDEGNSSDGEAYQNAEDN) form a linker region. The [4Fe-4S] cluster site is built by Cys205, Cys208, Cys216, and Cys219. 2 consecutive short sequence motifs (cx2C motif) follow at residues 205–208 (CGNC) and 216–219 (CASC). The fe-S binding site B stretch occupies residues 205-219 (CGNCYLGDAFRCASC).

The protein belongs to the anamorsin family. As to quaternary structure, monomer. Requires [4Fe-4S] cluster as cofactor.

Its subcellular location is the cytoplasm. It is found in the mitochondrion intermembrane space. Functionally, component of the cytosolic iron-sulfur (Fe-S) protein assembly (CIA) machinery. Required for the maturation of extramitochondrial Fe-S proteins. Part of an electron transfer chain functioning in an early step of cytosolic Fe-S biogenesis, facilitating the de novo assembly of a [4Fe-4S] cluster on the cytosolic Fe-S scaffold complex. Electrons are transferred from NADPH via a FAD- and FMN-containing diflavin oxidoreductase. Together with the diflavin oxidoreductase, also required for the assembly of the diferric tyrosyl radical cofactor of ribonucleotide reductase (RNR), probably by providing electrons for reduction during radical cofactor maturation in the catalytic small subunit. This Plasmodium knowlesi (strain H) protein is Anamorsin homolog.